Here is a 262-residue protein sequence, read N- to C-terminus: MRRTLYRLMIELTNGRFTSYILRKFAQSRLSSIIIPSYAKVFQINQDEMEKGLKEYRTLHELFTRKLKEGKRSIDTDASSIVSPVDGVFADYGPIEDAKTFDIKGKRYSIVDMLGNEERAQRYAGGTYMVIYLSPSHYHRIHSPLSGSVTERFVLGRKSYPVNAAGMEYGKEPLSKNYRSVTEVNSDGEHMALVKVGAMFVNSIELLHERDTVQKGEEMAYFTFGSTVVLLFEKDMIEVVQELKSGQELRLGEKIATRLAHK.

Active-site charge relay system; for autoendoproteolytic cleavage activity residues include Asp86, His142, and Ser226. The active-site Schiff-base intermediate with substrate; via pyruvic acid; for decarboxylase activity is Ser226. Ser226 is subject to Pyruvic acid (Ser); by autocatalysis.

This sequence belongs to the phosphatidylserine decarboxylase family. PSD-B subfamily. Prokaryotic type I sub-subfamily. In terms of assembly, heterodimer of a large membrane-associated beta subunit and a small pyruvoyl-containing alpha subunit. Pyruvate is required as a cofactor. Post-translationally, is synthesized initially as an inactive proenzyme. Formation of the active enzyme involves a self-maturation process in which the active site pyruvoyl group is generated from an internal serine residue via an autocatalytic post-translational modification. Two non-identical subunits are generated from the proenzyme in this reaction, and the pyruvate is formed at the N-terminus of the alpha chain, which is derived from the carboxyl end of the proenzyme. The autoendoproteolytic cleavage occurs by a canonical serine protease mechanism, in which the side chain hydroxyl group of the serine supplies its oxygen atom to form the C-terminus of the beta chain, while the remainder of the serine residue undergoes an oxidative deamination to produce ammonia and the pyruvoyl prosthetic group on the alpha chain. During this reaction, the Ser that is part of the protease active site of the proenzyme becomes the pyruvoyl prosthetic group, which constitutes an essential element of the active site of the mature decarboxylase.

The protein resides in the cell membrane. It carries out the reaction a 1,2-diacyl-sn-glycero-3-phospho-L-serine + H(+) = a 1,2-diacyl-sn-glycero-3-phosphoethanolamine + CO2. The protein operates within phospholipid metabolism; phosphatidylethanolamine biosynthesis; phosphatidylethanolamine from CDP-diacylglycerol: step 2/2. Catalyzes the formation of phosphatidylethanolamine (PtdEtn) from phosphatidylserine (PtdSer). The chain is Phosphatidylserine decarboxylase proenzyme from Bacillus thuringiensis (strain Al Hakam).